Consider the following 236-residue polypeptide: Urease accessory protein UreG 2 (236 aa).

The interval 1 to 40 (MEASVHIGNSVPHAHLHSAAPARPADPVRPDGSRRALRIG) is disordered. 43–50 (GPVGSGKT) lines the GTP pocket.

It belongs to the SIMIBI class G3E GTPase family. UreG subfamily. Homodimer. UreD, UreF and UreG form a complex that acts as a GTP-hydrolysis-dependent molecular chaperone, activating the urease apoprotein by helping to assemble the nickel containing metallocenter of UreC. The UreE protein probably delivers the nickel.

The protein localises to the cytoplasm. Facilitates the functional incorporation of the urease nickel metallocenter. This process requires GTP hydrolysis, probably effectuated by UreG. This is Urease accessory protein UreG 2 from Saccharopolyspora erythraea (strain ATCC 11635 / DSM 40517 / JCM 4748 / NBRC 13426 / NCIMB 8594 / NRRL 2338).